We begin with the raw amino-acid sequence, 348 residues long: MSTENGKSADAPVAAPAAKELTSKDYYFDSYAHFGIHEEMLKDEVRTTTYRNSIYHNSHLFKDKVVMDVGSGTGILSMFAAKAGAKKVFAMEFSNMALTSRKIIADNNLDHIVEVIQAKVEDVHELPGGIEKVDIIISEWMGYCLFYESMLNTVLVARDRWLAPNGMLFPDKARLYVCAIEDRQYKEDKIHWWDSVYGFNMSAIKNVAIKEPLVDIVDNAQVNTNNCLLKDVDLYTVKIEDLTFKSDFKLRCTRSDYIQAFVTFFTVEFSKCHKKTGFSTGPDVQYTHWKQTVFYLKDALTVKKGEEITGSFEMAPNKNNERDLDINISFDFKGEVCDLNEQNTYTMH.

The SAM-dependent MTase PRMT-type domain occupies 24–342 (KDYYFDSYAH…KGEVCDLNEQ (319 aa)). Residues His-37, Arg-46, Gly-70, Glu-92, and Glu-121 each contribute to the S-adenosyl-L-methionine site. Residues Glu-139 and Glu-148 contribute to the active site.

Belongs to the class I-like SAM-binding methyltransferase superfamily. Protein arginine N-methyltransferase family. As to quaternary structure, interacts with daf-16. Interacts with pgl-1 and pgl-3. Interacts with alg-1. Widely expressed in pharyngeal, body wall muscle, intestinal and vulval cells.

Its subcellular location is the cytoplasm. The protein localises to the nucleus. It carries out the reaction L-arginyl-[protein] + 2 S-adenosyl-L-methionine = N(omega),N(omega)-dimethyl-L-arginyl-[protein] + 2 S-adenosyl-L-homocysteine + 2 H(+). The catalysed reaction is L-arginyl-[protein] + S-adenosyl-L-methionine = N(omega)-methyl-L-arginyl-[protein] + S-adenosyl-L-homocysteine + H(+). Functionally, arginine methyltransferase that methylates (mono and asymmetric dimethylation) the guanidino nitrogens of arginyl residues present in target proteins. Catalyzes the formation of monomethylarginine and asymmetric dimethylarginine on histones H2A and H4, a specific tag for epigenetic transcriptional activation. Catalyzes asymmetric arginine dimethylation of mitochondrial proteins necessary for mitochondrial oxidative phosphorylation activity and thus aerobic respiration and ATP synthesis, and the mitochondrial stress response. Methylates arginine residues in P-granule components pgl-1 and pgl-3 to promote P-granule degradation by autophagy in somatic cells to ensure exclusive localization of the P-granules in germ cells. Modulates the interaction of P-granule proteins epg-2 and sepa-1. Methylates arginine residues in daf-16, which blocks ftt-2 binding to daf-16, prevents akt-mediated phosphorylation and allows for daf-16 to translocate to the nucleus. In turn, association with daf-16 therefore allows for the transcriptional activation of daf-16 and regulation of longevity-related genes. Maintains lifespan by modulating daf-16 activity downstream of the daf-2 signaling pathway. Plays a role in heat and oxidative stress resistance. Role in stress resistance and also fat storage may be in association with the daf-2 signaling pathway. Required for normal feeding behavior. This Caenorhabditis elegans protein is Protein arginine N-methyltransferase 1.